Consider the following 144-residue polypeptide: MAFTFAAFCYMLALLLTAALIFFAIWHIIAFDELKTDYKNPIDQCNTLNPLVLPEYLIHAFFCVMFLCAAEWLTLGLNMPLLAYHIWRYMSRPVMSGPGLYDPTTIMNADILAYCQKEGWCKLAFYLLAFFYYLYGMIYVLVSS.

The Cytoplasmic segment spans residues 1 to 10 (MAFTFAAFCY). The chain crosses the membrane as a helical span at residues 11 to 31 (MLALLLTAALIFFAIWHIIAF). Residues 32 to 56 (DELKTDYKNPIDQCNTLNPLVLPEY) lie on the Lumenal side of the membrane. The helical transmembrane segment at 57 to 77 (LIHAFFCVMFLCAAEWLTLGL) threads the bilayer. Topologically, residues 78 to 122 (NMPLLAYHIWRYMSRPVMSGPGLYDPTTIMNADILAYCQKEGWCK) are cytoplasmic. Residues 123–143 (LAFYLLAFFYYLYGMIYVLVS) form a helical membrane-spanning segment. A topological domain (lumenal) is located at residue Ser144.

This sequence belongs to the cornichon family. Interacts with AREG immature precursor and with immature TGFA, i.e. with a prosegment and lacking full N-glycosylation, but not with the fully N-glycosylated form. In the Golgi apparatus, may form a complex with GORASP55 and transmembrane TGFA.

It localises to the endoplasmic reticulum membrane. Its subcellular location is the golgi apparatus membrane. Its function is as follows. Involved in the selective transport and maturation of TGF-alpha family proteins. The chain is Protein cornichon homolog 1 (CNIH1) from Bos taurus (Bovine).